The following is a 408-amino-acid chain: NFATC2-interacting protein (408 aa).

Positions methionine 1–proline 113 are disordered. Over residues glutamine 24–valine 40 the composition is skewed to low complexity. Phosphoserine occurs at positions 41, 43, 73, 77, 79, 81, and 116. Residues lysine 118 and lysine 120 each participate in a glycyl lysine isopeptide (Lys-Gly) (interchain with G-Cter in SUMO2) cross-link. The interval glutamate 141–leucine 205 is disordered. Over residues arginine 169–isoleucine 181 the composition is skewed to basic and acidic residues. A phosphoserine mark is found at serine 187, serine 190, and serine 193. A compositionally biased stretch (basic residues) spans threonine 196–leucine 205. Residues lysine 197–serine 220 are a coiled coil. A phosphoserine mark is found at serine 209 and serine 303. Phosphothreonine occurs at positions 305 and 307. Residues leucine 337–glycine 408 enclose the Ubiquitin-like domain. Phosphoserine occurs at positions 358 and 379.

As to quaternary structure, interacts with NFATC2, TRAF1, TRAF2 and PRMT1. Interacts with UBE2I/UBC9. Methylation at the N-terminus by PRMT1 modulates interaction with the NFAT complex and results in augmented cytokine production.

The protein localises to the nucleus. It is found in the cytoplasm. In T-helper 2 (Th2) cells, regulates the magnitude of NFAT-driven transcription of a specific subset of cytokine genes, including IL3, IL4, IL5 and IL13, but not IL2. Recruits PRMT1 to the IL4 promoter; this leads to enhancement of histone H4 'Arg-3'-methylation and facilitates subsequent histone acetylation at the IL4 locus, thus promotes robust cytokine expression. Down-regulates formation of poly-SUMO chains by UBE2I/UBC9. The polypeptide is NFATC2-interacting protein (NFATC2IP) (Macaca fascicularis (Crab-eating macaque)).